The chain runs to 416 residues: Serine hydroxymethyltransferase 1 (416 aa).

(6S)-5,6,7,8-tetrahydrofolate is bound by residues L121 and 125-127; that span reads GHL. K229 bears the N6-(pyridoxal phosphate)lysine mark. (6S)-5,6,7,8-tetrahydrofolate contacts are provided by residues E245 and 354–356; that span reads SPF.

The protein belongs to the SHMT family. As to quaternary structure, homodimer. Requires pyridoxal 5'-phosphate as cofactor.

It is found in the cytoplasm. It carries out the reaction (6R)-5,10-methylene-5,6,7,8-tetrahydrofolate + glycine + H2O = (6S)-5,6,7,8-tetrahydrofolate + L-serine. It participates in one-carbon metabolism; tetrahydrofolate interconversion. The protein operates within amino-acid biosynthesis; glycine biosynthesis; glycine from L-serine: step 1/1. Functionally, catalyzes the reversible interconversion of serine and glycine with tetrahydrofolate (THF) serving as the one-carbon carrier. This reaction serves as the major source of one-carbon groups required for the biosynthesis of purines, thymidylate, methionine, and other important biomolecules. Also exhibits THF-independent aldolase activity toward beta-hydroxyamino acids, producing glycine and aldehydes, via a retro-aldol mechanism. This Vibrio vulnificus (strain CMCP6) protein is Serine hydroxymethyltransferase 1.